We begin with the raw amino-acid sequence, 137 residues long: Small ribosomal subunit protein uS12 (137 aa).

The segment at 1 to 57 is disordered; sequence MPTINQLVRKPRQSKIKKSDSPALNKGFNSKKKKFTDLNSPQKRGVCTRVGTMTPRK. The residue at position 102 (D102) is a 3-methylthioaspartic acid. Residues 118–137 are disordered; sequence SGVDGRRQGRSLYGTKKPKN.

Belongs to the universal ribosomal protein uS12 family. In terms of assembly, part of the 30S ribosomal subunit. Contacts proteins S8 and S17. May interact with IF1 in the 30S initiation complex.

In terms of biological role, with S4 and S5 plays an important role in translational accuracy. Its function is as follows. Interacts with and stabilizes bases of the 16S rRNA that are involved in tRNA selection in the A site and with the mRNA backbone. Located at the interface of the 30S and 50S subunits, it traverses the body of the 30S subunit contacting proteins on the other side and probably holding the rRNA structure together. The combined cluster of proteins S8, S12 and S17 appears to hold together the shoulder and platform of the 30S subunit. The protein is Small ribosomal subunit protein uS12 of Staphylococcus aureus (strain COL).